We begin with the raw amino-acid sequence, 435 residues long: Acetyltransferase atnC (435 aa).

Helical transmembrane passes span A10–I30, Y40–L60, and S68–L88. The N-linked (GlcNAc...) asparagine glycan is linked to N203. A run of 3 helical transmembrane segments spans residues F306–S326, I333–Y353, and V370–P390. N-linked (GlcNAc...) asparagine glycosylation occurs at N406. The helical transmembrane segment at L407–V427 threads the bilayer.

The protein belongs to the wax synthase family.

The protein localises to the membrane. It functions in the pathway secondary metabolite biosynthesis; terpenoid biosynthesis. In terms of biological role, acetyltransferase; part of the gene cluster that mediates the biosynthesis of the meroterpenoids arthripenoids. The pathway begins with the HR-PKS atnH that catalyzes two chain-extension steps to form a reduced triketide, which then primes the SAT domain in the NR-PKS atnG to initiate three more cycles of extension to give a linear hexaketide corresponding to the polyketide part of arthripenoids. The FAD-dependent monooxygenase atnJ then performs an oxidative decarboxylation at C11 of the atnH/atnG product, via an electrophilic aromatic hydroxylation with concomitant ipso-decarboxylation. The membrane-bound polyprenyl transferase atnF then introduces a farnesyl group before the FAD-dependent monooxygenase atnK functions as the first epoxidase on terminal C12'-C13' olefin, followed by a second epoxidation on C7'-C8' catalyzed by atnA. The terpene cyclase/mutase atnI then initiates the sequential tricyclic ring formation through protonation of the terminal epoxide and catalyzes the regioselective and stereoselective 6/6/6-tricyclic ring formation. The cytochrome P450 monooxygenase atnM is responsible for hydroxylating both C1' and C10'. The next steps may involve ketoreduction and acetyl transfer by the ketoreductase atnB and the acetyltransferase atnC, and lead to the production of arthripenoid B, the final biosynthetic product of the atn cluster. The hydroquinone moiety in arthripenoid B is prone to undergo spontaneous oxidation to afford a benzoquinone compound, a key intermediate for generating structure diversity. For instance, addition of a cysteine followed by ring contraction gives arthripenoid A, tautomerization gives the main product arthripenoid C, addition of a molecular of water or amine affords arthripenoid D or E, respectively, and loss of one water forms arthripenoid F. The sequence is that of Acetyltransferase atnC from Arthrinium sp.